A 477-amino-acid chain; its full sequence is MMMGNTFGSSLASLFFLWATIQQIFPNHLRIAIKEFLISTIQQLSFVQRFSDRFINFFSPYVEISFSQYEDYQFNHAFAAIETYLGAKATDKAKHLRASQVKESKGLVLKRDETKVRDEYEGGTVWWEMETDSTGYRTFKLTFHRRSRDIVTDSYIKYVFEEGKSIQAKSKQMKLFTNNPSSHWGTSKKSFWRYIDFEHPASFHTLAMDTKKKEEILNDLAAFSNGKEYYKKIGKAWKRGYLLHGPPGTGKSTMIAAMANHLNYSIYDLELTAIRNNSELRKLLTATSSKSIIVIEDIDCSLDLTGKRKKEKNLMTSREDGEQGTEEDKSFVTLSGLLNFIDGIWSACGQERIIIFTTNHFEKLDPALIRRGRMDMHIELSYCSFEAFKILAKNYLDLDTHPLFKKIESLLKETKIAPADVAENLMKKNTEIDADGSLKDLIQALEGKKKIHGAQVDEPKDKYTKKFYKAFCMSSKA.

Residues 1–26 (MMMGNTFGSSLASLFFLWATIQQIFP) form the signal peptide. 245–252 (GPPGTGKS) is a binding site for ATP.

The protein belongs to the AAA ATPase family. BCS1 subfamily. Mg(2+) serves as cofactor.

It carries out the reaction ATP + H2O = ADP + phosphate + H(+). In Arabidopsis thaliana (Mouse-ear cress), this protein is AAA-ATPase At3g28600.